The chain runs to 2034 residues: Sperm vesicle fusion protein fer-1 (2034 aa).

The tract at residues 1–80 (MTVKEKLLKV…GGSDIELLPD (80 aa)) is disordered. Residues 1–1998 (MTVKEKLLKV…CIKYFWHYYG (1998 aa)) lie on the Cytoplasmic side of the membrane. The span at 66-79 (ELSDDGGSDIELLP) shows a compositional bias: acidic residues. 4 C2 domains span residues 229–367 (RIDE…YLPT), 954–1082 (DSED…PQWF), 1120–1246 (YKER…KSDH), and 1363–1484 (KKGK…ATGG). The disordered stretch occupies residues 1563 to 1619 (QKAGKENFSDGSDQQNEDVSDGSWDEEDLEREKEKLKWEKHRSKGKPLKKVTTEKAE). Residues 1577–1591 (QNEDVSDGSWDEEDL) are compositionally biased toward acidic residues. Over residues 1600–1611 (WEKHRSKGKPLK) the composition is skewed to basic residues. Positions 1684-1831 (EYGAIPAPFN…EGIGSPSDVG (148 aa)) constitute a C2 5 domain. Residues 1953–1972 (QEPAGKKRSEPNHSPFLEKP) are disordered. Residues 1999 to 2019 (LQILLWLIIIVILILTIFVLL) form a helical membrane-spanning segment. Residues 2020 to 2034 (HTWPTILAEIIKAIF) are Extracellular-facing.

It belongs to the ferlin family. As to expression, exclusively expressed in the testis.

It localises to the membrane. Functionally, required for the fusion of the membranous organelles (MOs) with the plasma membrane, a process essential in spermiogenesis. The polypeptide is Sperm vesicle fusion protein fer-1 (fer-1) (Caenorhabditis elegans).